A 523-amino-acid chain; its full sequence is SWI/SNF and RSC complexes subunit arp9 (523 aa).

A compositionally biased stretch (basic and acidic residues) spans isoleucine 56–threonine 72. Disordered stretches follow at residues isoleucine 56 to glycine 92 and glutamine 319 to valine 339. A compositionally biased stretch (polar residues) spans glutamine 79–glycine 92. The segment covering glutamine 319–asparagine 336 has biased composition (basic and acidic residues).

The protein belongs to the actin family. In terms of assembly, component of the RSC complex composed of at least arp9, arp42, rsc1, rsc4, rsc7, rsc9, rsc58, sfh1, snf21, ssr1, ssr2, ssr3 and ssr4. The complex interacts with histone and histone variant components of centromeric chromatin. Component of the SWI/SNF global transcription activator complex composed of at least arp9, arp42, snf5, snf22, snf30, sbf59, sol1, ssr1, ssr2, ssr3, ssr4 and tfg3.

It is found in the cytoplasm. Its subcellular location is the nucleus. In terms of biological role, component of the chromatin structure remodeling complex (RSC), which is involved in transcription regulation and nucleosome positioning. Controls particularly membrane and organelle development genes. Part of the SWI/SNF complex, an ATP-dependent chromatin remodeling complex, required for the positive and negative regulation of gene expression of a large number of genes. It changes chromatin structure by altering DNA-histone contacts within a nucleosome, leading eventually to a change in nucleosome position, thus facilitating or repressing binding of gene-specific transcription factors. The chain is SWI/SNF and RSC complexes subunit arp9 (arp9) from Schizosaccharomyces pombe (strain 972 / ATCC 24843) (Fission yeast).